Consider the following 180-residue polypeptide: MASSVISSAAVATRTNVAQASMVAPFNGLKSAVSFPVSSKQNLDITSIASNGGRVQCMQVWPPYGKKKYETLSYLPDLTDEQLLKEIEYLLNKGWVPCLEFETEHGFVYREYHASPRYYDGRYWTMWKLPMFGCTDATQVLGELQEAKKAYPNAWIRIIGFDNVRQVQCISFIAYKPPGF.

A chloroplast-targeting transit peptide spans 1 to 56; sequence MASSVISSAAVATRTNVAQASMVAPFNGLKSAVSFPVSSKQNLDITSIASNGGRVQ.

Belongs to the RuBisCO small chain family. In terms of assembly, heterohexadecamer of 8 large and 8 small subunits.

The protein localises to the plastid. Its subcellular location is the chloroplast. In terms of biological role, ruBisCO catalyzes two reactions: the carboxylation of D-ribulose 1,5-bisphosphate, the primary event in carbon dioxide fixation, as well as the oxidative fragmentation of the pentose substrate. Both reactions occur simultaneously and in competition at the same active site. Although the small subunit is not catalytic it is essential for maximal activity. This chain is Ribulose bisphosphate carboxylase small subunit, chloroplastic 1, found in Petunia hybrida (Petunia).